Reading from the N-terminus, the 1165-residue chain is Vacuolar segregation protein 7 (1165 aa).

Over 1 to 919 (MTEEDRKLTV…RKSPFVKVKN (919 aa)) the chain is Cytoplasmic. The interval 118-147 (SVSSTNNNSNNALINHNPLSSHLSNPSSSL) is disordered. The residue at position 164 (Ser164) is a Phosphoserine. 4 disordered regions span residues 215–241 (SNNT…LPSL), 274–423 (KAKN…SEKP), 461–497 (LIFP…SAPL), and 560–668 (EPPH…KRPL). Over residues 216–230 (NNTAPSTSNNIGSNT) the composition is skewed to polar residues. The span at 334-345 (TTSTKTAPSTAP) shows a compositional bias: low complexity. The span at 346-367 (LGSTDNTQALTASVSSSNADNH) shows a compositional bias: polar residues. Low complexity predominate over residues 375 to 391 (SSNNNGNNSNSASNKTN). Over residues 393 to 412 (DIKNSNADLSASTSNNNAIN) the composition is skewed to polar residues. Residues 413 to 423 (DDSHESNSEKP) are compositionally biased toward basic and acidic residues. 2 stretches are compositionally biased toward low complexity: residues 469-485 (QQQQ…QQQQ) and 562-571 (PHQLQQQQPP). Polar residues predominate over residues 576–587 (SVDSYTSDNPDS). Positions 599-613 (SLVSLSKVSPHLLSS) are enriched in low complexity. The segment covering 614 to 662 (TSSNGNTISCPNVATNSQELEPNNDISTKKSLSNSTLRHSSANRNSNYG) has biased composition (polar residues). Residues 920–940 (FLYLAFVISSLLMTGFILGFL) traverse the membrane as a helical; Signal-anchor for type II membrane protein segment. Topologically, residues 941 to 1165 (LATNKELQDV…KDSMVHPGKK (225 aa)) are vacuolar. N-linked (GlcNAc...) asparagine glycosylation is found at Asn1020 and Asn1099. The tract at residues 1074–1121 (SPGSREAKHENDDDDDDDGDDGDDENNTNERQYKSKPNARDDKEDDTK) is disordered. Acidic residues predominate over residues 1085–1100 (DDDDDDDGDDGDDENN). Over residues 1111-1121 (NARDDKEDDTK) the composition is skewed to basic and acidic residues.

Component of the PI(3,5)P2 regulatory complex, composed of ATG18, FIG4, FAB1, VAC14 and VAC7. VAC14 nucleates the assembly of the complex and serves as a scaffold. In terms of processing, N-glycosylated.

The protein resides in the vacuole membrane. Its function is as follows. The PI(3,5)P2 regulatory complex regulates both the synthesis and turnover of phosphatidylinositol 3,5-bisphosphate (PtdIns(3,5)P2). Positively regulates FAB1 kinase activity. Major activator of FAB1 during hyperosmotic shock and can elevate levels of PtdIns(3,5)P2 in the absence of VAC14 and FIG4. Directly involved in vacuolar membrane scission. Required for normal vacuole acidification, inheritance and morphology. The chain is Vacuolar segregation protein 7 (VAC7) from Saccharomyces cerevisiae (strain ATCC 204508 / S288c) (Baker's yeast).